Reading from the N-terminus, the 198-residue chain is dTTP/UTP pyrophosphatase (198 aa).

D72 acts as the Proton acceptor in catalysis.

The protein belongs to the Maf family. YhdE subfamily. It depends on a divalent metal cation as a cofactor.

It localises to the cytoplasm. It catalyses the reaction dTTP + H2O = dTMP + diphosphate + H(+). The catalysed reaction is UTP + H2O = UMP + diphosphate + H(+). Functionally, nucleoside triphosphate pyrophosphatase that hydrolyzes dTTP and UTP. May have a dual role in cell division arrest and in preventing the incorporation of modified nucleotides into cellular nucleic acids. The polypeptide is dTTP/UTP pyrophosphatase (Pseudomonas fluorescens (strain Pf0-1)).